The following is a 54-amino-acid chain: UPF0391 membrane protein Mpe_A2904 (54 aa).

2 consecutive transmembrane segments (helical) span residues 5–25 and 30–50; these read AVVF…GIAA and IAKI…LFGL.

The protein belongs to the UPF0391 family.

It localises to the cell membrane. The chain is UPF0391 membrane protein Mpe_A2904 from Methylibium petroleiphilum (strain ATCC BAA-1232 / LMG 22953 / PM1).